We begin with the raw amino-acid sequence, 302 residues long: UDP-N-acetylenolpyruvoylglucosamine reductase (302 aa).

The 167-residue stretch at 30 to 196 (IGGPADLFVE…IAATLEMKKG (167 aa)) folds into the FAD-binding PCMH-type domain. Arg-174 is a catalytic residue. Residue Ser-225 is the Proton donor of the active site. The active site involves Glu-295.

This sequence belongs to the MurB family. FAD serves as cofactor.

The protein resides in the cytoplasm. The catalysed reaction is UDP-N-acetyl-alpha-D-muramate + NADP(+) = UDP-N-acetyl-3-O-(1-carboxyvinyl)-alpha-D-glucosamine + NADPH + H(+). It functions in the pathway cell wall biogenesis; peptidoglycan biosynthesis. Its function is as follows. Cell wall formation. The chain is UDP-N-acetylenolpyruvoylglucosamine reductase from Anoxybacillus flavithermus (strain DSM 21510 / WK1).